A 775-amino-acid chain; its full sequence is Kazrin (775 aa).

Positions 38–66 (AELSGGGGPGPGPGAAASASAAGDSAATN) are disordered. Residues 51–64 (GAAASASAAGDSAA) are compositionally biased toward low complexity. A coiled-coil region spans residues 74–256 (AQVLLREEVS…LATLTKDVPK (183 aa)). Positions 174–333 (RDFIRNYEQH…SAAEGDRSST (160 aa)) are interaction with PPL. The interval 290–427 (QQTLYHSHPP…QSLSLSEGEE (138 aa)) is disordered. Phosphoserine occurs at positions 352, 367, and 387. The segment covering 411–422 (SQCSPTRQSLSL) has biased composition (polar residues). 3 SAM domains span residues 446 to 511 (WKAG…YRDA), 524 to 588 (DHHW…LYQV), and 612 to 679 (WTNQ…SAVF). Disordered stretches follow at residues 688-715 (REAE…SSGL) and 729-762 (RGFS…LEQC). Positions 732–742 (SSKDPDFHDDY) are enriched in basic and acidic residues.

Belongs to the kazrin family. Isoform 2, isoform 3 and isoform 4 interact with PPL N-terminus. Isoform 2, isoform 3 and isoform 4 are expressed in several cell lines including keratinocytes and bladder and epidermoid carcinoma (at protein level). Isoform 2, isoform 3 and isoform 4 are expressed in hair follicle and interfollicular epidermis (at protein level).

It is found in the cytoplasm. Its subcellular location is the cytoskeleton. The protein resides in the cell junction. It localises to the desmosome. The protein localises to the nucleus. Component of the cornified envelope of keratinocytes. May be involved in the interplay between adherens junctions and desmosomes. The function in the nucleus is not known. The sequence is that of Kazrin from Homo sapiens (Human).